Consider the following 210-residue polypeptide: Cdc42 effector protein 2 (210 aa).

Ser2 carries the N-acetylserine modification. One can recognise a CRIB domain in the interval 30-44 (ISPPLGDFRHTIHIG). A phosphoserine mark is found at Ser31, Ser101, and Ser141. The interval 122-171 (PTAQAPPKPPRLHLETPQPSPQEGGSVDIWRIPETGSPNSGLTPESGAEE) is disordered.

This sequence belongs to the BORG/CEP family. Interacts with RHOQ and CDC42 in a GTP-dependent manner, and with SEPT7. In terms of tissue distribution, highly expressed in the heart. Weakly expressed in the pancreas and liver.

The protein localises to the endomembrane system. The protein resides in the cytoplasm. Its subcellular location is the cytoskeleton. Functionally, probably involved in the organization of the actin cytoskeleton. May act downstream of CDC42 to induce actin filament assembly leading to cell shape changes. Induces pseudopodia formation in fibroblasts in a CDC42-dependent manner. The polypeptide is Cdc42 effector protein 2 (CDC42EP2) (Homo sapiens (Human)).